Reading from the N-terminus, the 287-residue chain is ATP synthase gamma chain (287 aa).

It belongs to the ATPase gamma chain family. As to quaternary structure, F-type ATPases have 2 components, CF(1) - the catalytic core - and CF(0) - the membrane proton channel. CF(1) has five subunits: alpha(3), beta(3), gamma(1), delta(1), epsilon(1). CF(0) has three main subunits: a, b and c.

It localises to the cell inner membrane. Its function is as follows. Produces ATP from ADP in the presence of a proton gradient across the membrane. The gamma chain is believed to be important in regulating ATPase activity and the flow of protons through the CF(0) complex. This is ATP synthase gamma chain from Xylella fastidiosa (strain M12).